Consider the following 382-residue polypeptide: D-galactonate dehydratase (382 aa).

Asp183 contacts Mg(2+). Catalysis depends on His185, which acts as the Proton donor. Residues Glu209 and Glu235 each contribute to the Mg(2+) site. The active-site Proton acceptor is the His285.

The protein belongs to the mandelate racemase/muconate lactonizing enzyme family. GalD subfamily. Requires Mg(2+) as cofactor.

It catalyses the reaction D-galactonate = 2-dehydro-3-deoxy-D-galactonate + H2O. It functions in the pathway carbohydrate acid metabolism; D-galactonate degradation; D-glyceraldehyde 3-phosphate and pyruvate from D-galactonate: step 1/3. In terms of biological role, catalyzes the dehydration of D-galactonate to 2-keto-3-deoxy-D-galactonate. The protein is D-galactonate dehydratase of Pectobacterium atrosepticum (strain SCRI 1043 / ATCC BAA-672) (Erwinia carotovora subsp. atroseptica).